The sequence spans 315 residues: Aspartate carbamoyltransferase catalytic subunit (315 aa).

Positions 64 and 65 each coordinate carbamoyl phosphate. L-aspartate is bound at residue lysine 92. Carbamoyl phosphate contacts are provided by arginine 114, histidine 142, and glutamine 145. L-aspartate is bound by residues arginine 175 and arginine 229. Residues glycine 270 and proline 271 each contribute to the carbamoyl phosphate site.

Belongs to the aspartate/ornithine carbamoyltransferase superfamily. ATCase family. As to quaternary structure, heterododecamer (2C3:3R2) of six catalytic PyrB chains organized as two trimers (C3), and six regulatory PyrI chains organized as three dimers (R2).

The enzyme catalyses carbamoyl phosphate + L-aspartate = N-carbamoyl-L-aspartate + phosphate + H(+). Its pathway is pyrimidine metabolism; UMP biosynthesis via de novo pathway; (S)-dihydroorotate from bicarbonate: step 2/3. Functionally, catalyzes the condensation of carbamoyl phosphate and aspartate to form carbamoyl aspartate and inorganic phosphate, the committed step in the de novo pyrimidine nucleotide biosynthesis pathway. The sequence is that of Aspartate carbamoyltransferase catalytic subunit from Methylorubrum extorquens (strain CM4 / NCIMB 13688) (Methylobacterium extorquens).